The sequence spans 279 residues: Ribosomal RNA small subunit methyltransferase A (279 aa).

Positions 11, 13, 42, 63, 88, and 104 each coordinate S-adenosyl-L-methionine.

The protein belongs to the class I-like SAM-binding methyltransferase superfamily. rRNA adenine N(6)-methyltransferase family. RsmA subfamily.

It is found in the cytoplasm. The enzyme catalyses adenosine(1518)/adenosine(1519) in 16S rRNA + 4 S-adenosyl-L-methionine = N(6)-dimethyladenosine(1518)/N(6)-dimethyladenosine(1519) in 16S rRNA + 4 S-adenosyl-L-homocysteine + 4 H(+). Its function is as follows. Specifically dimethylates two adjacent adenosines (A1518 and A1519) in the loop of a conserved hairpin near the 3'-end of 16S rRNA in the 30S particle. May play a critical role in biogenesis of 30S subunits. The sequence is that of Ribosomal RNA small subunit methyltransferase A from Synechococcus sp. (strain JA-3-3Ab) (Cyanobacteria bacterium Yellowstone A-Prime).